Reading from the N-terminus, the 258-residue chain is Regulatory protein RecX (258 aa).

It belongs to the RecX family.

The protein resides in the cytoplasm. Functionally, modulates RecA activity. This chain is Regulatory protein RecX, found in Streptococcus pneumoniae (strain 70585).